Here is a 453-residue protein sequence, read N- to C-terminus: MCCYLNLLMIQFESSHICHWFWNTPYRALQRAYKASKKVRNIHTNYIFCKSKPAFQRFGYNLDLYIDSILDESSFQIYWGLLEFKASRFVLTKFSNLIFKHNFHLLTQTDGNKLFSNSFDREQSLLFCDIHSTSLKIINRKLAWIEAALADLEMLRDNSSSTSITPILNKVYNVSLPMSLDSTSKRVAYESVGLVPRSITRTFARFQTELAGRSVSVVLPEFRLAKYQATASVQYMACLIFLPWVFSTICKIIFLQPLVSHYWDTMQTQVFFNASQEQRALRRLQQIEELLWLDIVIASVPNKHLQDIAGEIHNKTLELVDIYNRESICTILNLLTDWISITCLACLLTWGKKRLAIFNSWIQELFYSLSDTMKAFFILLLTDLCIGFHSPHGWEIIITLFLEHIGFAHNKYVVSCFVSTFPVILDTVLKYWIFRHLNRISPSIVVTYHTMNE.

4 helical membrane passes run 235–255 (YMACLIFLPWVFSTICKIIFL), 328–348 (ICTILNLLTDWISITCLACLL), 378–398 (ILLLTDLCIGFHSPHGWEIII), and 414–434 (VSCFVSTFPVILDTVLKYWIF).

This sequence belongs to the CemA family.

It localises to the plastid. It is found in the chloroplast inner membrane. It carries out the reaction K(+)(in) + H(+)(out) = K(+)(out) + H(+)(in). Its function is as follows. Contributes to K(+)/H(+) antiport activity by supporting proton efflux to control proton extrusion and homeostasis in chloroplasts in a light-dependent manner to modulate photosynthesis. Prevents excessive induction of non-photochemical quenching (NPQ) under continuous-light conditions. Indirectly promotes efficient inorganic carbon uptake into chloroplasts. In Zygnema circumcarinatum (Green alga), this protein is Potassium/proton antiporter CemA.